Reading from the N-terminus, the 101-residue chain is Cilia- and flagella-associated protein 141 (101 aa).

Microtubule inner protein component of sperm flagellar doublet microtubules.

The protein resides in the cytoplasm. Its subcellular location is the cytoskeleton. It localises to the cilium axoneme. It is found in the flagellum axoneme. In terms of biological role, microtubule inner protein (MIP) part of the dynein-decorated doublet microtubules (DMTs) in cilia axoneme, which is required for motile cilia beating. This chain is Cilia- and flagella-associated protein 141, found in Mus musculus (Mouse).